Reading from the N-terminus, the 59-residue chain is UPF0434 protein VV1_2087 (59 aa).

This sequence belongs to the UPF0434 family.

This chain is UPF0434 protein VV1_2087, found in Vibrio vulnificus (strain CMCP6).